We begin with the raw amino-acid sequence, 597 residues long: Coronatine-insensitive protein homolog 1b (597 aa).

The F-box domain occupies 22–64 (SIPEEALHLVLGYVDDPRDREAVSLVCRRWHRIDALTRKHVTV). Residues Arg92, Arg353, Tyr391, Arg414, and Arg501 each coordinate jasmonate.

Interacts with TIFY10C/JAZ8 in a coronatine-dependent manner. Interacts with TIFY3/JAZ1, TIFY6A/JAZ3, TIFY6B/JAZ4, TIFY10A/JAZ6, TIFY10B/JAZ7, TIFY11A/JAZ9, TIFY11B/JAZ10, TIFY11C/JAZ11 and TIFY11D/JAZ12 in a coronatine-dependent manner. As to expression, expressed in roots, shoots, leaf sheaths and leaf blades.

In terms of biological role, involved in jasmonate (JA) signaling. Required for jasmonate signaling in plant defense responses. Can complement Arabidopsis coi1-1 mutant and restore jasmonate signaling. Component of SCF(COI1) E3 ubiquitin ligase complexes, which may mediate the ubiquitination and subsequent proteasomal degradation of target proteins, including TIFY/JAZ family. The sequence is that of Coronatine-insensitive protein homolog 1b from Oryza sativa subsp. japonica (Rice).